The sequence spans 623 residues: Bifunctional methionine biosynthesis protein MetXA/MetW (623 aa).

A compositionally biased stretch (polar residues) spans 1–17 (MTSGRSTRVTMFESQAS). Positions 1-30 (MTSGRSTRVTMFESQASMGEPSNEDLSSTD) are disordered. The 309-residue stretch at 77–385 (NAVLVCHAVS…TTNAGHDAFL (309 aa)) folds into the AB hydrolase-1 domain. Ser183 functions as the Nucleophile in the catalytic mechanism. Arg253 lines the substrate pocket. Active-site residues include Asp348 and His381. Position 382 (Asp382) interacts with substrate. The tract at residues 417–619 (NVDEESILEI…NADTAVIAFH (203 aa)) is metW.

The protein in the N-terminal section; belongs to the AB hydrolase superfamily. MetX family. This sequence in the C-terminal section; belongs to the MetW family. In terms of assembly, homodimer.

It localises to the cytoplasm. It catalyses the reaction L-homoserine + acetyl-CoA = O-acetyl-L-homoserine + CoA. Its pathway is amino-acid biosynthesis; L-methionine biosynthesis via de novo pathway; O-acetyl-L-homoserine from L-homoserine: step 1/1. Its function is as follows. Transfers an acetyl group from acetyl-CoA to L-homoserine, forming acetyl-L-homoserine. The chain is Bifunctional methionine biosynthesis protein MetXA/MetW from Rhodopirellula baltica (strain DSM 10527 / NCIMB 13988 / SH1).